The sequence spans 92 residues: DNA-directed RNA polymerase subunit Rpo11 (92 aa).

It belongs to the archaeal Rpo11/eukaryotic RPB11/RPC19 RNA polymerase subunit family. Part of the RNA polymerase complex.

The protein resides in the cytoplasm. The enzyme catalyses RNA(n) + a ribonucleoside 5'-triphosphate = RNA(n+1) + diphosphate. In terms of biological role, DNA-dependent RNA polymerase (RNAP) catalyzes the transcription of DNA into RNA using the four ribonucleoside triphosphates as substrates. The protein is DNA-directed RNA polymerase subunit Rpo11 of Methanosarcina mazei (strain ATCC BAA-159 / DSM 3647 / Goe1 / Go1 / JCM 11833 / OCM 88) (Methanosarcina frisia).